The primary structure comprises 204 residues: Somatotropin (204 aa).

The signal sequence occupies residues 1 to 17; sequence MDRVVLLLSVLSLGVSS. At Gln18 the chain carries Pyrrolidone carboxylic acid. His36 is a Zn(2+) binding site. A disulfide bridge connects residues Cys69 and Cys177. Zn(2+) is bound at residue Glu186. Cysteines 194 and 202 form a disulfide.

This sequence belongs to the somatotropin/prolactin family.

It localises to the secreted. In terms of biological role, growth hormone plays an important role in growth control and is involved in the regulation of several anabolic processes. Implicated as an osmoregulatory substance important for seawater adaptation. The polypeptide is Somatotropin (gh) (Lates calcarifer (Barramundi)).